The chain runs to 276 residues: 3' cyclic ADP-D-ribose synthase HopAM1 (276 aa).

Residues 20–38 (VEASQVKSAGTSSTTNIDS) show a composition bias toward polar residues. The disordered stretch occupies residues 20-39 (VEASQVKSAGTSSTTNIDSK). A TIR domain region spans residues 165 to 214 (KNGIAHAKKMAFFITPEWLGSDFCKQEFQWLSETKNKDIKSAFVIFKDVD). The active site involves Gln-190.

Homodimer.

It localises to the host cytoplasm. The protein resides in the host cytosol. It catalyses the reaction NAD(+) = 3'cADPR + nicotinamide + H(+). NAD(+) hydrolase (NADase) that cleaves NAD(+) into nicotinamide and 3' cyclic ADP-D-ribose (3'cADPR, v2-cADPR). Upon infiltration of A.thaliana with this bacteria an effector-triggered immunity-like phenotype (ETI-like, cell death with severe chlorosis) is seen, 3'cADPR levels rise while NAD(+) levels remain constant. Plant immune responses are suppressed. Triggers hypersensitive response-like cell death in Nicotiana tabacum cv. Xanthi and N.benthamiana when transiently expressed, depletes NAD(+) in N.benthamiana. Causes cell death upon induction in yeast due to NAD(+) depletion and/or 3'cADPR itself. Transgenic A.thaliana expressing HopAM1 suppresses its plant immune system upon challenge; the plants produce 3'cADPR without significantly depleting NAD(+). This chain is 3' cyclic ADP-D-ribose synthase HopAM1, found in Pseudomonas syringae pv. tomato (strain ATCC BAA-871 / DC3000).